The following is a 398-amino-acid chain: Phosphoglycerate kinase (398 aa).

Substrate contacts are provided by residues 23 to 25 (DLN), arginine 38, 61 to 64 (HFGR), arginine 119, and arginine 152. ATP-binding positions include lysine 202, glutamate 324, and 354–357 (GGDT).

This sequence belongs to the phosphoglycerate kinase family. In terms of assembly, monomer.

Its subcellular location is the cytoplasm. The catalysed reaction is (2R)-3-phosphoglycerate + ATP = (2R)-3-phospho-glyceroyl phosphate + ADP. Its pathway is carbohydrate degradation; glycolysis; pyruvate from D-glyceraldehyde 3-phosphate: step 2/5. The polypeptide is Phosphoglycerate kinase (Bradyrhizobium diazoefficiens (strain JCM 10833 / BCRC 13528 / IAM 13628 / NBRC 14792 / USDA 110)).